The chain runs to 72 residues: Large ribosomal subunit protein bL28 (72 aa).

The protein belongs to the bacterial ribosomal protein bL28 family.

The protein is Large ribosomal subunit protein bL28 of Chlorobaculum parvum (strain DSM 263 / NCIMB 8327) (Chlorobium vibrioforme subsp. thiosulfatophilum).